A 714-amino-acid chain; its full sequence is Fumarate reductase flavoprotein subunit (714 aa).

FAD is bound by residues glycine 13–alanine 16, serine 42–serine 44, and glycine 49–glycine 50. Histidine 43 is modified (tele-8alpha-FAD histidine). Residues histidine 257 and arginine 273 contribute to the active site. FAD-binding positions include glutamate 420 and serine 436–valine 437.

This sequence belongs to the FAD-dependent oxidoreductase 2 family. FRD/SDH subfamily. As to quaternary structure, part of an enzyme complex containing three subunits: a flavoprotein (frdA), an iron-sulfur protein (frdB), and diheme cytochrome b (frdC). FAD is required as a cofactor.

It localises to the cell inner membrane. The enzyme catalyses a quinone + succinate = fumarate + a quinol. The fumarate reductase enzyme complex is required for fumarate respiration. The polypeptide is Fumarate reductase flavoprotein subunit (frdA) (Helicobacter pylori (strain J99 / ATCC 700824) (Campylobacter pylori J99)).